Consider the following 146-residue polypeptide: Hemoglobin subunit beta-1/2 (146 aa).

In terms of domain architecture, Globin spans 2-146; that stretch reads EWTDKERSII…VVSALGKQYH (145 aa). Heme b-binding residues include histidine 63 and histidine 92.

This sequence belongs to the globin family. Hb1 is a heterotetramer of two alpha-1 chains and two beta chains. Hb2 is a heterotetramer of two alpha-2 chains and two beta chains. Red blood cells.

In terms of biological role, involved in oxygen transport from gills to the various peripheral tissues. In Trematomus newnesi (Dusky notothen), this protein is Hemoglobin subunit beta-1/2.